Here is a 258-residue protein sequence, read N- to C-terminus: UPF0246 protein Bpro_3713 (258 aa).

Belongs to the UPF0246 family.

The protein is UPF0246 protein Bpro_3713 of Polaromonas sp. (strain JS666 / ATCC BAA-500).